Here is an 838-residue protein sequence, read N- to C-terminus: G-protein coupled receptor-associated sorting protein 2 (838 aa).

3 disordered regions span residues 1–121 (MTGA…PGAR), 218–293 (ASNE…NPFS), and 531–552 (LELS…PSPE). Residues 13–31 (KPEKKAGEEVVAGPEREND) are compositionally biased toward basic and acidic residues. A compositionally biased stretch (polar residues) spans 220–235 (NESGFWSADETSTASS). The segment covering 255 to 271 (RSRHRAKHQTNPRSRPR) has biased composition (basic residues). 2 positions are modified to phosphoserine: Ser282 and Ser284. Over residues 542-552 (SLLQPDQPSPE) the composition is skewed to polar residues.

It belongs to the GPRASP family. In terms of assembly, interacts with cytoplasmic tails of a variety of G protein-coupled receptors such as muscarinic acetylcholine receptor M1/CHRM1 and calcitonin receptor/CALCR.

Functionally, may play a role in regulation of a variety of G-protein coupled receptors. The sequence is that of G-protein coupled receptor-associated sorting protein 2 (GPRASP2) from Pongo abelii (Sumatran orangutan).